A 983-amino-acid polypeptide reads, in one-letter code: Polyhomeotic-like protein 3 (983 aa).

Disordered regions lie at residues M1–P34, L103–S149, V225–T283, L313–Q332, L339–P410, P477–P509, and D601–I620. 2 stretches are compositionally biased toward low complexity: residues T9–S29 and L103–S126. The span at I127–I139 shows a compositional bias: polar residues. The span at S140–S149 shows a compositional bias: low complexity. Positions V225–I257 are enriched in polar residues. Residues S258 to E271 show a composition bias toward basic and acidic residues. Phosphoserine is present on residues S263 and S272. The segment covering S274 to T283 has biased composition (polar residues). Phosphoserine is present on S315. A compositionally biased stretch (polar residues) spans S365–T383. Residues V384–V398 show a composition bias toward low complexity. The span at P477–Y489 shows a compositional bias: polar residues. Residues S490 to S506 are compositionally biased toward low complexity. Phosphothreonine is present on residues T609 and T614. S616 is subject to Phosphoserine. Glycyl lysine isopeptide (Lys-Gly) (interchain with G-Cter in SUMO2) cross-links involve residues K691 and K732. Residues K691 to V720 carry the HD1 motif. Phosphoserine is present on residues S761 and S762. The segment at E776 to K810 adopts an FCS-type zinc-finger fold. 4 residues coordinate Zn(2+): C785, C788, C804, and C808. K810 is covalently cross-linked (Glycyl lysine isopeptide (Lys-Gly) (interchain with G-Cter in SUMO2)). Disordered stretches follow at residues R827–A847 and E864–E889. Positions W919 to S983 constitute an SAM domain.

In terms of assembly, component of a PRC1-like complex.

The protein resides in the nucleus. Functionally, component of a Polycomb group (PcG) multiprotein PRC1-like complex, a complex class required to maintain the transcriptionally repressive state of many genes, including Hox genes, throughout development. PcG PRC1 complex acts via chromatin remodeling and modification of histones; it mediates monoubiquitination of histone H2A 'Lys-119', rendering chromatin heritably changed in its expressibility. The polypeptide is Polyhomeotic-like protein 3 (PHC3) (Homo sapiens (Human)).